We begin with the raw amino-acid sequence, 221 residues long: Oligoribonuclease (221 aa).

The Exonuclease domain maps to 21–186 (LVWVDLEMTG…ADIVESIREL (166 aa)). Tyr-143 is an active-site residue.

This sequence belongs to the oligoribonuclease family.

The protein localises to the cytoplasm. In terms of biological role, 3'-to-5' exoribonuclease specific for small oligoribonucleotides. This is Oligoribonuclease from Corynebacterium efficiens (strain DSM 44549 / YS-314 / AJ 12310 / JCM 11189 / NBRC 100395).